The following is a 445-amino-acid chain: 3-phosphoshikimate 1-carboxyvinyltransferase (445 aa).

Positions 25, 26, and 30 each coordinate 3-phosphoshikimate. A phosphoenolpyruvate-binding site is contributed by Lys25. Residues Gly98 and Arg126 each contribute to the phosphoenolpyruvate site. 3-phosphoshikimate-binding residues include Ser171, Gln173, Asp324, and Lys351. Gln173 is a phosphoenolpyruvate binding site. Asp324 serves as the catalytic Proton acceptor. Residues Arg355 and Arg398 each contribute to the phosphoenolpyruvate site.

Belongs to the EPSP synthase family. Monomer.

The protein localises to the cytoplasm. The catalysed reaction is 3-phosphoshikimate + phosphoenolpyruvate = 5-O-(1-carboxyvinyl)-3-phosphoshikimate + phosphate. Its pathway is metabolic intermediate biosynthesis; chorismate biosynthesis; chorismate from D-erythrose 4-phosphate and phosphoenolpyruvate: step 6/7. In terms of biological role, catalyzes the transfer of the enolpyruvyl moiety of phosphoenolpyruvate (PEP) to the 5-hydroxyl of shikimate-3-phosphate (S3P) to produce enolpyruvyl shikimate-3-phosphate and inorganic phosphate. The chain is 3-phosphoshikimate 1-carboxyvinyltransferase from Hydrogenovibrio crunogenus (strain DSM 25203 / XCL-2) (Thiomicrospira crunogena).